Here is a 146-residue protein sequence, read N- to C-terminus: Gene 19.2 protein (146 aa).

The sequence is that of Gene 19.2 protein (19.2) from Escherichia coli (Bacteriophage T3).